A 170-amino-acid chain; its full sequence is MGNEASYPAEICSHFDEDEIKRLRKRFKKLDLDSSSALSVKEFTSMPELQENPLVQRVIDVFDTDGDGQVDFREFILGTSQFSVRGDEEQKLRFAFSIYDMDKDGYISNGELFQVLKMMVGDNLKDWQLQQLVDKTIILLDKDGDGKISFQEFSAVVRSLEIHKHLVTIV.

G2 carries N-myristoyl glycine lipidation. EF-hand domains follow at residues 18–46, 50–85, 87–122, and 128–163; these read DEIKRLRKRFKKLDLDSSSALSVKEFTSM, QENPLVQRVIDVFDTDGDGQVDFREFILGTSQFSVR, DEEQKLRFAFSIYDMDKDGYISNGELFQVLKMMVGD, and QLQQLVDKTIILLDKDGDGKISFQEFSAVVRSLEIH. The Ca(2+) site is built by D63, D65, D67, Q69, E74, D100, D102, D104, Y106, and E111. The tract at residues 131–136 is calcineurin A binding; sequence QLVDKT. Residues D141, D143, D145, K147, and E152 each coordinate Ca(2+).

This sequence belongs to the calcineurin regulatory subunit family. In terms of assembly, forms a complex composed of a calmodulin-dependent catalytic subunit (also known as calcineurin A) and a regulatory Ca(2+)-binding subunit (also known as calcineurin B). There are three catalytic subunits, each encoded by a separate gene (PPP3CA, PPP3CB, and PPP3CC) and two regulatory subunits which are also encoded by separate genes (PPP3R1 and PPP3R2). Interacts with SPATA33 (via PQIIIT motif).

The protein localises to the mitochondrion. Functionally, regulatory subunit of calcineurin, a calcium-dependent, calmodulin stimulated protein phosphatase. Confers calcium sensitivity. In Bos taurus (Bovine), this protein is Calcineurin subunit B type 2 (PPP3R2).